The sequence spans 158 residues: NADH-quinone oxidoreductase subunit B (158 aa).

[4Fe-4S] cluster contacts are provided by C37, C38, C102, and C132.

This sequence belongs to the complex I 20 kDa subunit family. NDH-1 is composed of 14 different subunits. Subunits NuoB, C, D, E, F, and G constitute the peripheral sector of the complex. It depends on [4Fe-4S] cluster as a cofactor.

It is found in the cell inner membrane. It catalyses the reaction a quinone + NADH + 5 H(+)(in) = a quinol + NAD(+) + 4 H(+)(out). In terms of biological role, NDH-1 shuttles electrons from NADH, via FMN and iron-sulfur (Fe-S) centers, to quinones in the respiratory chain. Couples the redox reaction to proton translocation (for every two electrons transferred, four hydrogen ions are translocated across the cytoplasmic membrane), and thus conserves the redox energy in a proton gradient. The protein is NADH-quinone oxidoreductase subunit B of Bordetella avium (strain 197N).